Consider the following 103-residue polypeptide: MYAVIKTGGKQYRVAAGEKIKVEQIAADVGQEIVFNEVLAVGNGAELKVGTPLVSGATVSVTVLAHGKHDKVSIFKMRRRKHYQKRQGHRQQFTELLVNTIAG.

This sequence belongs to the bacterial ribosomal protein bL21 family. Part of the 50S ribosomal subunit. Contacts protein L20.

Its function is as follows. This protein binds to 23S rRNA in the presence of protein L20. This Albidiferax ferrireducens (strain ATCC BAA-621 / DSM 15236 / T118) (Rhodoferax ferrireducens) protein is Large ribosomal subunit protein bL21.